We begin with the raw amino-acid sequence, 377 residues long: MRLSVRRVLLAAGCALVLVLAVQLGQQVLECRAVLAGLRSPRGAMRPEQEELVMVGTNHVEYRYGKAMPLIFVGGVPRSGTTLMRAMLDAHPEVRCGEETRIIPRVLAMRQAWSKSGREKLRLDEAGVTDEVLDAAMQAFILEVIAKHGEPARVLCNKDPFTLKSSVYLSRLFPNSKFLLMVRDGRASVHSMITRKVTIAGFDLSSYRDCLTKWNKAIEVMYAQCMEVGKEKCLPVYYEQLVLHPRRSLKLILDFLGIAWSDAVLHHEDLIGKPGGVSLSKIERSTDQVIKPVNLEALSKWTGHIPGDVVRDMAQIAPMLAQLGYDPYANPPNYGNPDPFVINNTQRVLKGDYKTPANLKGYFQVNQNSTSSHLGSS.

Over 1–8 (MRLSVRRV) the chain is Cytoplasmic. Residues 9-25 (LLAAGCALVLVLAVQLG) form a helical; Signal-anchor for type II membrane protein membrane-spanning segment. Residues 26–377 (QQVLECRAVL…NSTSSHLGSS (352 aa)) lie on the Lumenal side of the membrane. Residue 78-82 (RSGTT) participates in 3'-phosphoadenylyl sulfate binding. C96 and C156 form a disulfide bridge. The Proton donor/acceptor role is filled by E99. The interval 101 to 105 (RIIPR) is interaction with peptide substrate. Residues R183, S191, and R195 each coordinate 3'-phosphoadenylyl sulfate. An intrachain disulfide couples C225 to C233. 3'-phosphoadenylyl sulfate contacts are provided by residues Y238, 285-294 (STDQVIKPVN), and K300. N-linked (GlcNAc...) asparagine glycans are attached at residues N343 and N368.

Belongs to the protein sulfotransferase family. As to quaternary structure, homodimer. Can also form heterodimers with TPST1. Post-translationally, N-glycosylated. In terms of tissue distribution, widely expressed.

It is found in the golgi apparatus membrane. The catalysed reaction is L-tyrosyl-[protein] + 3'-phosphoadenylyl sulfate = O-sulfo-L-tyrosine-[protein] + adenosine 3',5'-bisphosphate + H(+). Catalyzes the O-sulfation of tyrosine residues within acidic motifs of polypeptides, using 3'-phosphoadenylyl sulfate (PAPS) as cosubstrate. This chain is Protein-tyrosine sulfotransferase 2 (TPST2), found in Homo sapiens (Human).